The chain runs to 147 residues: MRLVVQRVTDASVSVGGETVGEIGLGLMVLVGVTHEDTSEDAAYLAEKLVNLRIFEDEGEKMNLSLLDVGGSVLSVSQFTLYGDTKKGRRPNFTKAAKPDQALQLYEEWNSMLRAKGVTVETGRFGEMMDVKLTNSGPVTFIMDSKA.

A Gly-cisPro motif, important for rejection of L-amino acids motif is present at residues 137-138; sequence GP.

This sequence belongs to the DTD family. In terms of assembly, homodimer.

Its subcellular location is the cytoplasm. The enzyme catalyses glycyl-tRNA(Ala) + H2O = tRNA(Ala) + glycine + H(+). It carries out the reaction a D-aminoacyl-tRNA + H2O = a tRNA + a D-alpha-amino acid + H(+). An aminoacyl-tRNA editing enzyme that deacylates mischarged D-aminoacyl-tRNAs. Also deacylates mischarged glycyl-tRNA(Ala), protecting cells against glycine mischarging by AlaRS. Acts via tRNA-based rather than protein-based catalysis; rejects L-amino acids rather than detecting D-amino acids in the active site. By recycling D-aminoacyl-tRNA to D-amino acids and free tRNA molecules, this enzyme counteracts the toxicity associated with the formation of D-aminoacyl-tRNA entities in vivo and helps enforce protein L-homochirality. This is D-aminoacyl-tRNA deacylase from Bacillus licheniformis (strain ATCC 14580 / DSM 13 / JCM 2505 / CCUG 7422 / NBRC 12200 / NCIMB 9375 / NCTC 10341 / NRRL NRS-1264 / Gibson 46).